A 452-amino-acid chain; its full sequence is Isocitrate dehydrogenase [NADP], mitochondrial (452 aa).

The N-terminal 39 residues, Met1–Tyr39, are a transit peptide targeting the mitochondrion. Residues Lys45, Lys48, Lys67, and Lys69 each carry the N6-acetyllysine modification. N6-acetyllysine; alternate occurs at positions 80 and 106. N6-succinyllysine; alternate occurs at positions 80 and 106. Residues Thr115–Thr117 and Arg122 contribute to the NADP(+) site. Residue Thr117 coordinates D-threo-isocitrate. Residues Ser134–Arg140 and Arg149 each bind D-threo-isocitrate. Residue Lys155 is modified to N6-acetyllysine. Residue Lys166 is modified to N6-acetyllysine; alternate. Residue Lys166 is modified to N6-succinyllysine; alternate. Arg172 serves as a coordination point for D-threo-isocitrate. Lys180 and Lys193 each carry N6-acetyllysine; alternate. Residues Lys180 and Lys193 each carry the N6-succinyllysine; alternate modification. The residue at position 199 (Lys199) is an N6-acetyllysine. Lys256 bears the N6-acetyllysine; alternate mark. Lys256 carries the N6-succinyllysine; alternate modification. N6-acetyllysine occurs at positions 263, 272, 275, and 280. An N6-acetyllysine; alternate modification is found at Lys282. Position 282 is an N6-succinyllysine; alternate (Lys282). Asp291 contacts Mn(2+). NADP(+) is bound at residue Lys299. Asp314 contacts Mn(2+). Residues Gly349–His354 and Asn367 each bind NADP(+). Lys384 is modified (N6-acetyllysine; alternate). At Lys384 the chain carries N6-succinyllysine; alternate. 3 positions are modified to N6-acetyllysine: Lys400, Lys413, and Lys442.

This sequence belongs to the isocitrate and isopropylmalate dehydrogenases family. Homodimer. Mg(2+) is required as a cofactor. Requires Mn(2+) as cofactor. Post-translationally, acetylation at Lys-413 dramatically reduces catalytic activity. Deacetylated by SIRT3. As to expression, predominantly expressed in heart, liver and kidney. Expressed in activated B lymphocytes.

It localises to the mitochondrion. It carries out the reaction D-threo-isocitrate + NADP(+) = 2-oxoglutarate + CO2 + NADPH. Functionally, plays a role in intermediary metabolism and energy production. It may tightly associate or interact with the pyruvate dehydrogenase complex. This Mus musculus (Mouse) protein is Isocitrate dehydrogenase [NADP], mitochondrial (Idh2).